The primary structure comprises 572 residues: Proline--tRNA ligase (572 aa).

Belongs to the class-II aminoacyl-tRNA synthetase family. ProS type 1 subfamily. Homodimer.

The protein resides in the cytoplasm. The enzyme catalyses tRNA(Pro) + L-proline + ATP = L-prolyl-tRNA(Pro) + AMP + diphosphate. Its function is as follows. Catalyzes the attachment of proline to tRNA(Pro) in a two-step reaction: proline is first activated by ATP to form Pro-AMP and then transferred to the acceptor end of tRNA(Pro). As ProRS can inadvertently accommodate and process non-cognate amino acids such as alanine and cysteine, to avoid such errors it has two additional distinct editing activities against alanine. One activity is designated as 'pretransfer' editing and involves the tRNA(Pro)-independent hydrolysis of activated Ala-AMP. The other activity is designated 'posttransfer' editing and involves deacylation of mischarged Ala-tRNA(Pro). The misacylated Cys-tRNA(Pro) is not edited by ProRS. The protein is Proline--tRNA ligase of Citrobacter koseri (strain ATCC BAA-895 / CDC 4225-83 / SGSC4696).